Here is a 37-residue protein sequence, read N- to C-terminus: Large ribosomal subunit protein bL36 (37 aa).

This sequence belongs to the bacterial ribosomal protein bL36 family.

The chain is Large ribosomal subunit protein bL36 from Synechococcus elongatus (strain ATCC 33912 / PCC 7942 / FACHB-805) (Anacystis nidulans R2).